The primary structure comprises 360 residues: 3-dehydroquinate synthase (360 aa).

NAD(+) is bound by residues 71-76 (DGEQYK), 105-109 (GVVGD), 129-130 (TT), K142, K151, and 169-172 (TLNT). Residues E184, H248, and H265 each contribute to the Zn(2+) site.

The protein belongs to the sugar phosphate cyclases superfamily. Dehydroquinate synthase family. It depends on Co(2+) as a cofactor. Requires Zn(2+) as cofactor. NAD(+) is required as a cofactor.

It localises to the cytoplasm. It carries out the reaction 7-phospho-2-dehydro-3-deoxy-D-arabino-heptonate = 3-dehydroquinate + phosphate. It functions in the pathway metabolic intermediate biosynthesis; chorismate biosynthesis; chorismate from D-erythrose 4-phosphate and phosphoenolpyruvate: step 2/7. In terms of biological role, catalyzes the conversion of 3-deoxy-D-arabino-heptulosonate 7-phosphate (DAHP) to dehydroquinate (DHQ). This chain is 3-dehydroquinate synthase, found in Coxiella burnetii (strain RSA 331 / Henzerling II).